The chain runs to 244 residues: L-xylulose reductase (244 aa).

Met1 bears the N-acetylmethionine mark. NADP(+) is bound at residue 11–39 (LVTGAGKGIGRSIVKALHAAGARVVAVSR). Omega-N-methylarginine is present on Arg21. Ser46 bears the Phosphoserine mark. Ser136 contributes to the substrate binding site. Residue Tyr149 is the Proton acceptor of the active site. The active site involves Lys153.

This sequence belongs to the short-chain dehydrogenases/reductases (SDR) family. In terms of assembly, homotetramer.

It localises to the membrane. The catalysed reaction is xylitol + NADP(+) = L-xylulose + NADPH + H(+). Its function is as follows. Catalyzes the NADPH-dependent reduction of several pentoses, tetroses, trioses, alpha-dicarbonyl compounds and L-xylulose. Participates in the uronate cycle of glucose metabolism. May play a role in the water absorption and cellular osmoregulation in the proximal renal tubules by producing xylitol, an osmolyte, thereby preventing osmolytic stress from occurring in the renal tubules. The protein is L-xylulose reductase (DCXR) of Bos taurus (Bovine).